The sequence spans 175 residues: Large ribosomal subunit protein uL6 (175 aa).

The protein belongs to the universal ribosomal protein uL6 family. In terms of assembly, part of the 50S ribosomal subunit.

Its function is as follows. This protein binds to the 23S rRNA, and is important in its secondary structure. It is located near the subunit interface in the base of the L7/L12 stalk, and near the tRNA binding site of the peptidyltransferase center. The sequence is that of Large ribosomal subunit protein uL6 from Xanthomonas oryzae pv. oryzae (strain MAFF 311018).